Here is a 464-residue protein sequence, read N- to C-terminus: MHSRTNCLQTSVRAPQPHFRPFTAVKTCRQRCSTTAAAAKRDQAQEQQPWIQVGLGLAAAATAVAVGLGAAALPAQAVTSEQLLFLEAWRAVDRAYVDKSFNGQSWFKLRETYLKKEPMDRRAQTYDAIRKLLAVLDDPFTRFLEPSRLAALRRGTAGSVTGVGLEITYDGGSGKDVVVLTPAPGGPAEKAGARAGDVIVTVDGTAVKGLSLYDVSDLLQGEADSQVEVVLHAPGAPSNTRTLQLTRQKVTINPVTFTTCSNVAAAALPPGAAKQQLGYVRLATFNSNTTAAAQQAFTELSKQGVAGLVLDIRNNGGGLFPAGVNVARMLVDRGDLVLIADSQGIRDIYSADGNSIDSATPLVVLVNRGTASASEVLAGALKDSKRGLIAGERTFGKGLIQTVVDLSDGSGVAVTVARYQTPAGVDINKIGVSPDVQLDPEVLPTDLEGVCRVLGSDAAPRLFG.

Residues 1–32 (MHSRTNCLQTSVRAPQPHFRPFTAVKTCRQRC) constitute a chloroplast transit peptide. The transit peptide at 33 to 77 (STTAAAAKRDQAQEQQPWIQVGLGLAAAATAVAVGLGAAALPAQA) directs the protein to the thylakoid. Residues 149 to 234 (LAALRRGTAG…SQVEVVLHAP (86 aa)) enclose the PDZ domain. Catalysis depends on charge relay system residues Ser-372 and Lys-397.

The protein belongs to the peptidase S41A family. Monomer.

The protein resides in the plastid. Its subcellular location is the chloroplast thylakoid lumen. It carries out the reaction The enzyme shows specific recognition of a C-terminal tripeptide, Xaa-Yaa-Zaa, in which Xaa is preferably Ala or Leu, Yaa is preferably Ala or Tyr, and Zaa is preferably Ala, but then cleaves at a variable distance from the C-terminus. A typical cleavage is -Ala-Ala-|-Arg-Ala-Ala-Lys-Glu-Asn-Tyr-Ala-Leu-Ala-Ala.. With respect to regulation, not inhibited by antipain, 4-amidinophenylmethanesulfonyl fluoride, aprotinin, chymostatin, 3,4-dichloroisocoumarin, diisopropyl fluorophosphate, E64, EDTA, EGTA, iodoacetamide, leupeptin, pepstatin, o-phenanthroline, N-ethylmaleimide, phosphoramidon or phenylmethylsulfonyl fluoride. In terms of biological role, protease involved in the C-terminal processing of the chloroplastic D1 protein of photosystem II. This proteolytic processing is necessary to allow the light-driven assembly of the tetranuclear manganese cluster, which is responsible for photosynthetic water oxidation. The chain is C-terminal processing peptidase, chloroplastic (ctpA) from Tetradesmus obliquus (Green alga).